A 639-amino-acid chain; its full sequence is UvrABC system protein C (639 aa).

The 79-residue stretch at 31–109 (EQAGVYRMYD…IKKYQPKYNI (79 aa)) folds into the GIY-YIG domain. Residues 218–253 (SAVIEQLVARMELASNELHFELAAKYRDQIVTLRKV) enclose the UVR domain.

The protein belongs to the UvrC family. Interacts with UvrB in an incision complex.

The protein localises to the cytoplasm. In terms of biological role, the UvrABC repair system catalyzes the recognition and processing of DNA lesions. UvrC both incises the 5' and 3' sides of the lesion. The N-terminal half is responsible for the 3' incision and the C-terminal half is responsible for the 5' incision. This Colwellia psychrerythraea (strain 34H / ATCC BAA-681) (Vibrio psychroerythus) protein is UvrABC system protein C.